The following is a 435-amino-acid chain: Actin-like protein 7A (435 aa).

Disordered stretches follow at residues 1–20 and 29–65; these read MWAP…VGNQ and QTAS…ERPK. The required for interaction with TES stretch occupies residues 31–51; that stretch reads ASLRDGPAKRAVWVRRRSSEP. Basic and acidic residues predominate over residues 47–65; the sequence is RSSEPQEPTESKAAKERPK.

The protein belongs to the actin family. As to quaternary structure, interacts (via N-terminus) with TES (via LIM domain 2). Heterodimer with TES; the heterodimer interacts with ENAH to form a heterotrimer. Interacts with ACTL9. Interacts with CYLC1; the interaction may be relevant for proper acrosome attachment to the nuclear envelope.

The protein resides in the cytoplasm. It localises to the cytoskeleton. It is found in the golgi apparatus. The protein localises to the nucleus. Its function is as follows. Essential for normal spermatogenesis and male fertility. Required for normal sperm head morphology, acroplaxome formation, acrosome attachment, and acrosome granule stability. May anchor and stabilize acrosomal adherence to the acroplaxome at least in part by facilitating the presence of F-actin in the subacrosomal space. May play an important role in formation and fusion of Golgi-derived vesicles during acrosome biogenesis. The sequence is that of Actin-like protein 7A (ACTL7A) from Macaca fascicularis (Crab-eating macaque).